The primary structure comprises 494 residues: Transcriptional regulator of yeast form adherence 3 (494 aa).

The SPX domain occupies 1-360 (MKFAKTLERT…SLGIQKTFPK (360 aa)). The RING-type zinc finger occupies 398-437 (CPICMNIAYKPIRLSCGHLFCVRCLVKMKQDDKTSCPLCR).

Its subcellular location is the nucleus. In terms of biological role, transcription factor required for yeast cell adherence to silicone substrate. This is Transcriptional regulator of yeast form adherence 3 (TRY3) from Candida albicans (strain SC5314 / ATCC MYA-2876) (Yeast).